The sequence spans 305 residues: Ribonuclease BN (305 aa).

7 residues coordinate Zn(2+): histidine 64, histidine 66, aspartate 68, histidine 69, histidine 141, aspartate 212, and histidine 270. Aspartate 68 functions as the Proton acceptor in the catalytic mechanism.

The protein belongs to the RNase Z family. RNase BN subfamily. In terms of assembly, homodimer. Zn(2+) is required as a cofactor.

Functionally, zinc phosphodiesterase, which has both exoribonuclease and endoribonuclease activities. The protein is Ribonuclease BN of Escherichia coli O45:K1 (strain S88 / ExPEC).